The chain runs to 628 residues: Monoterpene synthase like 2, chloroplastic (628 aa).

Mg(2+)-binding residues include Asp-379, Asp-383, and Asp-531. The DDXXD motif signature appears at 379 to 383 (DDIYD).

Belongs to the terpene synthase family. Tpsd subfamily. The cofactor is Mg(2+). Requires Mn(2+) as cofactor.

The protein resides in the plastid. The protein localises to the chloroplast. It participates in terpene metabolism; oleoresin biosynthesis. It functions in the pathway secondary metabolite biosynthesis; terpenoid biosynthesis. In terms of biological role, monoterpene synthase (TPS) involved in the biosynthesis of monoterpene natural products included in conifer oleoresin secretions and volatile emissions; these compounds contribute to biotic and abiotic stress defense against herbivores and pathogens. This is Monoterpene synthase like 2, chloroplastic from Pinus banksiana (Jack pine).